A 232-amino-acid polypeptide reads, in one-letter code: Small ribosomal subunit protein uS2 (232 aa).

This sequence belongs to the universal ribosomal protein uS2 family.

This chain is Small ribosomal subunit protein uS2, found in Carboxydothermus hydrogenoformans (strain ATCC BAA-161 / DSM 6008 / Z-2901).